Here is a 272-residue protein sequence, read N- to C-terminus: Putative phosphoenolpyruvate synthase regulatory protein (272 aa).

152-159 is a binding site for ADP; sequence GVSRCGKT.

Belongs to the pyruvate, phosphate/water dikinase regulatory protein family. PSRP subfamily.

It catalyses the reaction [pyruvate, water dikinase] + ADP = [pyruvate, water dikinase]-phosphate + AMP + H(+). The enzyme catalyses [pyruvate, water dikinase]-phosphate + phosphate + H(+) = [pyruvate, water dikinase] + diphosphate. Bifunctional serine/threonine kinase and phosphorylase involved in the regulation of the phosphoenolpyruvate synthase (PEPS) by catalyzing its phosphorylation/dephosphorylation. The protein is Putative phosphoenolpyruvate synthase regulatory protein of Pseudomonas putida (strain ATCC 700007 / DSM 6899 / JCM 31910 / BCRC 17059 / LMG 24140 / F1).